The primary structure comprises 368 residues: uncharacterized protein (368 aa).

The 118-residue stretch at 3–120 (KILLADDERI…QIISSLEEII (118 aa)) folds into the Response regulatory domain. A 4-aspartylphosphate modification is found at Asp-55. Residues 259–361 (SKMIRLIADE…GLTPSEFRRK (103 aa)) form the HTH araC/xylS-type domain. 2 consecutive DNA-binding regions (H-T-H motif) follow at residues 278 to 299 (WAAK…KQET) and 327 to 351 (VSEI…KKYT).

In terms of processing, phosphorylated by YesM.

The protein localises to the cytoplasm. Its function is as follows. Member of the two-component regulatory system YesM/YesN. This is an uncharacterized protein from Bacillus subtilis (strain 168).